We begin with the raw amino-acid sequence, 291 residues long: Taste receptor type 2 member 16 (291 aa).

Residue M1 is a topological domain, extracellular. Residues 2–22 form a helical membrane-spanning segment; that stretch reads IPIQLTVFFMIIYVLESLTII. Over 23–41 the chain is Cytoplasmic; sequence VQSSLIVAVLGREWLQVRR. The chain crosses the membrane as a helical span at residues 42–62; the sequence is LMPVDMILISLGISRFCLQWA. The Extracellular segment spans residues 63–84; that stretch reads SMLNBFCSYFNLNYVLCNLTIT. N80 carries N-linked (GlcNAc...) asparagine glycosylation. The chain crosses the membrane as a helical span at residues 85–105; it reads WEFFNILTFWLNSLLTVFYCI. The Cytoplasmic portion of the chain corresponds to 106–125; it reads KVSSFTHHIFLWLRWRILRL. The chain crosses the membrane as a helical span at residues 126 to 146; the sequence is FPWILLGSLMITCVTIIPSAI. Residues 147 to 182 are Extracellular-facing; the sequence is GNYIQIQLLTMEHLPRNSTVTDKLEKFHQYEFQAHT. N-linked (GlcNAc...) asparagine glycosylation is present at N163. The chain crosses the membrane as a helical span at residues 183-203; it reads VALVIPFILFLASTILLMASL. Residues 204 to 228 lie on the Cytoplasmic side of the membrane; that stretch reads TKQIQHHSTGHCNPSMKAHFTALRS. The chain crosses the membrane as a helical span at residues 229-249; it reads LAVLFIVFTSYFLTILITIIG. Residues 250–257 are Extracellular-facing; the sequence is TLFDRRCW. The chain crosses the membrane as a helical span at residues 258-278; sequence LWVWEAFVYAFILMHSTSLML. At 279 to 291 the chain is on the cytoplasmic side; that stretch reads SSPTLKRILKGKC.

This sequence belongs to the G-protein coupled receptor T2R family. In terms of assembly, interacts with RTP3 and RTP4.

It is found in the cell membrane. Functionally, receptor that may play a role in the perception of bitterness and is gustducin-linked. May play a role in sensing the chemical composition of the gastrointestinal content. The activity of this receptor may stimulate alpha gustducin, mediate PLC-beta-2 activation and lead to the gating of TRPM5. This is Taste receptor type 2 member 16 (TAS2R16) from Gorilla gorilla gorilla (Western lowland gorilla).